Consider the following 790-residue polypeptide: MAEQVLPQALYLSNMRKAVKIRERTPEDIFKPTNGIIHHFKTMHRYTLEMFRTCQFCPQFREIIHKALIDRNIQATLESQKKLNWCREVRKLVALKTNGDGNCLMHATSQYMWGVQDTDLVLRKALFSTLKETDTRNFKFRWQLESLKSQEFVETGLCYDTRNWNDEWDNLIKMASTDTPMARSGLQYNSLEEIHIFVLCNILRRPIIVISDKMLRSLESGSNFAPLKVGGIYLPLHWPAQECYRYPIVLGYDSHHFVPLVTLKDSGPEIRAVPLVNRDRGRFEDLKVHFLTDPENEMKEKLLKEYLMVIEIPVQGWDHGTTHLINAAKLDEANLPKEINLVDDYFELVQHEYKKWQENSEQGRREGHAQNPMEPSVPQLSLMDVKCETPNCPFFMSVNTQPLCHECSERRQKNQNKLPKLNSKPGPEGLPGMALGASRGEAYEPLAWNPEESTGGPHSAPPTAPSPFLFSETTAMKCRSPGCPFTLNVQHNGFCERCHNARQLHASHAPDHTRHLDPGKCQACLQDVTRTFNGICSTCFKRTTAEASSSLSTSLPPSCHQRSKSDPSRLVRSPSPHSCHRAGNDAPAGCLSQAARTPGDRTGTSKCRKAGCVYFGTPENKGFCTLCFIEYRENKHFAAASGKVSPTASRFQNTIPCLGRECGTLGSTMFEGYCQKCFIEAQNQRFHEAKRTEEQLRSSQRRDVPRTTQSTSRPKCARASCKNILACRSEELCMECQHPNQRMGPGAHRGEPAPEDPPKQRCRAPACDHFGNAKCNGYCNECFQFKQMYG.

Residue A2 is modified to N-acetylalanine. Residues 58 to 300 form a TRAF-binding region; it reads PQFREIIHKA…LTDPENEMKE (243 aa). Positions 92-263 constitute an OTU domain; the sequence is LVALKTNGDG…SHHFVPLVTL (172 aa). The active site involves D100. C103 acts as the Nucleophile in catalysis. Interaction with ubiquitin regions lie at residues 157-159, 190-192, and 224-227; these read LCY, SLE, and FAPL. H256 functions as the Proton acceptor in the catalytic mechanism. The span at 357 to 368 shows a compositional bias: basic and acidic residues; that stretch reads QENSEQGRREGH. The interval 357–377 is disordered; the sequence is QENSEQGRREGHAQNPMEPSV. The interval 369–775 is interaction with TNIP1; the sequence is AQNPMEPSVP…ACDHFGNAKC (407 aa). Residues 381 to 416 form an A20-type 1 zinc finger; it reads SLMDVKCETPNCPFFMSVNTQPLCHECSERRQKNQN. The segment at 386 to 453 is interaction with RIPK1; that stretch reads KCETPNCPFF…EPLAWNPEES (68 aa). The Zn(2+) site is built by C387, C392, C404, and C407. 2 disordered regions span residues 415 to 434 and 447 to 468; these read QNKL…PGMA and AWNP…PSPF. Position 459 is a phosphoserine (S459). 2 consecutive A20-type zinc fingers follow at residues 472–507 and 515–548; these read ETTA…LHAS and HLDP…AEAS. Residues C478, C483, C495, C498, C521, C524, C536, and C539 each coordinate Zn(2+). The interval 550–583 is disordered; it reads SLSTSLPPSCHQRSKSDPSRLVRSPSPHSCHRAG. Residue S575 is modified to Phosphoserine. An A20-type 4 zinc finger spans residues 601-636; that stretch reads RTGTSKCRKAGCVYFGTPENKGFCTLCFIEYRENKH. Residues 605 to 655 are required for proteasomal degradation of UBE2N and UBE2D3, TRAF6 deubiquitination, and TAX1BP1 interaction with UBE2N; the sequence is SKCRKAGCVYFGTPENKGFCTLCFIEYRENKHFAAASGKVSPTASRFQNTI. A sufficient for inhibitory activity of TNF-induced NF-kappa-B activity region spans residues 606–790; that stretch reads KCRKAGCVYF…ECFQFKQMYG (185 aa). Residues C607, C612, C624, and C627 each contribute to the Zn(2+) site. Position 645 is a phosphoserine (S645). An A20-type 5 zinc finger spans residues 651–686; sequence FQNTIPCLGRECGTLGSTMFEGYCQKCFIEAQNQRF. C657, C662, C674, and C677 together coordinate Zn(2+). Residues 689-705 show a composition bias toward basic and acidic residues; the sequence is AKRTEEQLRSSQRRDVP. The tract at residues 689–712 is disordered; the sequence is AKRTEEQLRSSQRRDVPRTTQSTS. The required for lysosomal localization and for TRAF2 lysosomal degradation stretch occupies residues 697–790; the sequence is RSSQRRDVPR…ECFQFKQMYG (94 aa). 2 consecutive A20-type zinc fingers follow at residues 710 to 745 and 756 to 790; these read STSR…RMGP and DPPK…QMYG. Zn(2+)-binding residues include C716, C721, C733, C736, C762, C767, C779, and C782.

Belongs to the peptidase C64 family. In terms of assembly, homodimer. Interacts with TNIP1, TAX1BP1 and TRAF2. Interacts with RNF11, ITCH and TAX1BP1 only after TNF stimulation; these interaction are transient and they are lost after 1 hour of stimulation with TNF. Interacts with YWHAZ and YWHAH. Interacts with IKBKG; the interaction is induced by TNF stimulation and by polyubiquitin. Interacts with RIPK1. Interacts with UBE2N; the interaction requires TAX1BP1. Interacts with TRAF6; the interaction is inhibited by HTLV-1 protein Tax. In terms of processing, proteolytically cleaved by MALT1 upon TCR stimulation; disrupts NF-kappa-B inhibitory function and results in increased IL-2 production. It is proposed that only a fraction of TNFAIP3 colocalized with TCR and CBM complex is cleaved, leaving the main TNFAIP3 pool intact.

Its subcellular location is the cytoplasm. The protein localises to the nucleus. It localises to the lysosome. The catalysed reaction is Thiol-dependent hydrolysis of ester, thioester, amide, peptide and isopeptide bonds formed by the C-terminal Gly of ubiquitin (a 76-residue protein attached to proteins as an intracellular targeting signal).. In terms of biological role, ubiquitin-editing enzyme that contains both ubiquitin ligase and deubiquitinase activities. Involved in immune and inflammatory responses signaled by cytokines, such as TNF-alpha and IL-1 beta, or pathogens via Toll-like receptors (TLRs) through terminating NF-kappa-B activity. Essential component of a ubiquitin-editing protein complex, comprising also RNF11, ITCH and TAX1BP1, that ensures the transient nature of inflammatory signaling pathways. In cooperation with TAX1BP1 promotes disassembly of E2-E3 ubiquitin protein ligase complexes in IL-1R and TNFR-1 pathways; affected are at least E3 ligases TRAF6, TRAF2 and BIRC2, and E2 ubiquitin-conjugating enzymes UBE2N and UBE2D3. In cooperation with TAX1BP1 promotes ubiquitination of UBE2N and proteasomal degradation of UBE2N and UBE2D3. Upon TNF stimulation, deubiquitinates 'Lys-63'-polyubiquitin chains on RIPK1 and catalyzes the formation of 'Lys-48'-polyubiquitin chains. This leads to RIPK1 proteasomal degradation and consequently termination of the TNF- or LPS-mediated activation of NF-kappa-B. Deubiquitinates TRAF6 probably acting on 'Lys-63'-linked polyubiquitin. Upon T-cell receptor (TCR)-mediated T-cell activation, deubiquitinates 'Lys-63'-polyubiquitin chains on MALT1 thereby mediating disassociation of the CBM (CARD11:BCL10:MALT1) and IKK complexes and preventing sustained IKK activation. Deubiquitinates NEMO/IKBKG; the function is facilitated by TNIP1 and leads to inhibition of NF-kappa-B activation. Upon stimulation by bacterial peptidoglycans, probably deubiquitinates RIPK2. Can also inhibit I-kappa-B-kinase (IKK) through a non-catalytic mechanism which involves polyubiquitin; polyubiquitin promotes association with IKBKG and prevents IKK MAP3K7-mediated phosphorylation. Targets TRAF2 for lysosomal degradation. In vitro able to deubiquitinate 'Lys-11'-, 'Lys-48'- and 'Lys-63' polyubiquitin chains. Inhibitor of programmed cell death. Has a role in the function of the lymphoid system. Required for LPS-induced production of pro-inflammatory cytokines and IFN beta in LPS-tolerized macrophages. This Homo sapiens (Human) protein is Tumor necrosis factor alpha-induced protein 3 (TNFAIP3).